The following is a 303-amino-acid chain: NmrA-like family domain-containing oxidoreductase FVEG_08287 (303 aa).

NADP(+) contacts are provided by residues 8-13 (LGAGEL), 8-14 (LGAGELG), 36-39 (LRPS), Arg37, 56-57 (QG), 77-79 (IFR), and 159-162 (FMSF).

It belongs to the NmrA-type oxidoreductase family.

Functionally, nmrA-like family domain-containing oxidoreductase; part of the Fusarium detoxification of benzoxazolinone cluster 1 (FDB1) involved in the degradation of benzoxazolinones produced by the host plant. Maize, wheat, and rye produce the 2 benzoxazinone phytoanticipins 2,4-dihy-droxy-7-methoxy-1,4-benzoxazin-3-one (DIMBOA) and 2,4-dihydroxy-1,4-benzoxazin-3-one (DIBOA) that, due to their inherent instability once released, spontaneously degrade to the more stable corresponding benzoxazolinones, 6-methoxy-2-benzoxazolinone (MBOA) and 2-benzoxazolinone (BOA), respectively. The first step in the detoxification of benzoxazolinones involves the hydrolysis of the cyclic ester bond of benzoxazolinones by the FDB1 cluster gamma-lactamase MBL1 to aminophenols. MBL1 is able to convert BOA into 2-aminophenol (2-AP), as well as MBOA into 5-methoxy-2-aminophenol (2-AMP). The FDB2 cluster N-malonyltransferase FDB2/NAT1 then metabolizes aminophenols via N-malonylation to non-toxic malonamic acids. FDB2/NAT1 converts 2-AP into N-(2-hydroxyphenyl) malonamic acid (HPMA) and 2-AMP into N-(2-hydroxy-4-methoxyphenyl) malonamic acid (HMPMA). The duplicated dienlactone hydrolases DLH1 and DLH2 may provide redundant function for hydrolyzing the lactone moiety in the BOA molecule. The roles of the amidases an other enzymes encoded by the 2 FDB clusters have not been identified so far. This is NmrA-like family domain-containing oxidoreductase FVEG_08287 from Gibberella moniliformis (strain M3125 / FGSC 7600) (Maize ear and stalk rot fungus).